Here is a 279-residue protein sequence, read N- to C-terminus: Energy-coupling factor transporter ATP-binding protein EcfA1 (279 aa).

Positions 8 to 240 constitute an ABC transporter domain; that stretch reads IKFENVSFSY…KQFLRDINLD (233 aa). 41 to 48 serves as a coordination point for ATP; that stretch reads GHNGSGKS.

Belongs to the ABC transporter superfamily. Energy-coupling factor EcfA family. As to quaternary structure, forms a stable energy-coupling factor (ECF) transporter complex composed of 2 membrane-embedded substrate-binding proteins (S component), 2 ATP-binding proteins (A component) and 2 transmembrane proteins (T component).

Its subcellular location is the cell membrane. ATP-binding (A) component of a common energy-coupling factor (ECF) ABC-transporter complex. Unlike classic ABC transporters this ECF transporter provides the energy necessary to transport a number of different substrates. In Mycoplasmoides gallisepticum (strain R(low / passage 15 / clone 2)) (Mycoplasma gallisepticum), this protein is Energy-coupling factor transporter ATP-binding protein EcfA1.